Here is a 369-residue protein sequence, read N- to C-terminus: Methylthioribose-1-phosphate isomerase (369 aa).

Substrate-binding positions include 54–56 (RGA), Arg95, and Gln208. Residue Asp249 is the Proton donor of the active site. 259-260 (NK) contacts substrate.

It belongs to the eIF-2B alpha/beta/delta subunits family. MtnA subfamily.

The enzyme catalyses 5-(methylsulfanyl)-alpha-D-ribose 1-phosphate = 5-(methylsulfanyl)-D-ribulose 1-phosphate. It participates in amino-acid biosynthesis; L-methionine biosynthesis via salvage pathway; L-methionine from S-methyl-5-thio-alpha-D-ribose 1-phosphate: step 1/6. Functionally, catalyzes the interconversion of methylthioribose-1-phosphate (MTR-1-P) into methylthioribulose-1-phosphate (MTRu-1-P). In Desulfatibacillum aliphaticivorans, this protein is Methylthioribose-1-phosphate isomerase.